The primary structure comprises 188 residues: MPHVNYEQIEYAVRLILEAIGEDPNREGLVDTPKRVAKMYAEVFAGLHEDPKQHFQTVFSEDHEELVLVKDIPFYSMCEHHLVPFFGVAHVAYIPRGGKVTGLSKLARAVETVARRPQLQERITATVADSIMETLDPYGVMVVVEAEHMCMTMRGVKKPGAKTVTTAVRGVFETDQVARAEVLSLIKG.

Zn(2+)-binding residues include cysteine 78, histidine 81, and cysteine 150.

The protein belongs to the GTP cyclohydrolase I family. As to quaternary structure, homomer.

The enzyme catalyses GTP + H2O = 7,8-dihydroneopterin 3'-triphosphate + formate + H(+). It functions in the pathway cofactor biosynthesis; 7,8-dihydroneopterin triphosphate biosynthesis; 7,8-dihydroneopterin triphosphate from GTP: step 1/1. The chain is GTP cyclohydrolase 1 from Geobacillus sp. (strain WCH70).